Consider the following 561-residue polypeptide: Efflux pump bfoC (561 aa).

The interval 1-55 (MSDTARILGGPSASSSRDGGMELNSFTEVSQTNSRSHSTKEEEGQVDDQQRPARE) is disordered. Residues 24 to 36 (NSFTEVSQTNSRS) show a composition bias toward polar residues. The span at 38 to 55 (STKEEEGQVDDQQRPARE) shows a compositional bias: basic and acidic residues. A run of 13 helical transmembrane segments spans residues 59 to 79 (GVLG…CIFC), 103 to 123 (DVGW…LTFG), 128 to 148 (FFPI…GSFI), 164 to 184 (VAGL…SQCV), 194 to 214 (GFIM…GGAF), 222 to 242 (WCFY…LFTF), 257 to 277 (AVGL…CLLL), 293 to 313 (VVAL…LQLW), 335 to 355 (LYGF…PIWF), 378 to 398 (VVFA…GPFM), 425 to 445 (IGYQ…PIFV), 457 to 477 (TATA…VSVA), and 530 to 550 (VHTF…ATVI).

This sequence belongs to the major facilitator superfamily. TCR/Tet family.

It localises to the cell membrane. Efflux pump; part of the gene cluster that mediates the biosynthesis of bifonsecin B, a dimeric gamma-naphthopyrone. The protein is Efflux pump bfoC of Aspergillus brasiliensis (strain CBS 101740 / IMI 381727 / IBT 21946).